The chain runs to 366 residues: Histone-lysine N-methyltransferase SETD7 (366 aa).

MORN repeat units follow at residues 36–58, 59–81, and 106–128; these read FEGN…DGST, LEGY…DGGV, and FKGQ…DGGS. Positions 214–336 constitute an SET domain; that stretch reads ERVYVADSLI…AEEELTVAYG (123 aa). Residues 226 to 228, asparagine 296, histidine 297, and glutamate 356 each bind S-adenosyl-L-methionine; that span reads AGE.

Belongs to the class V-like SAM-binding methyltransferase superfamily. Histone-lysine methyltransferase family. SET7 subfamily. Interacts with IPF1/PDX-1.

Its subcellular location is the nucleus. It localises to the chromosome. It catalyses the reaction L-lysyl(4)-[histone H3] + S-adenosyl-L-methionine = N(6)-methyl-L-lysyl(4)-[histone H3] + S-adenosyl-L-homocysteine + H(+). The catalysed reaction is L-lysyl-[protein] + S-adenosyl-L-methionine = N(6)-methyl-L-lysyl-[protein] + S-adenosyl-L-homocysteine + H(+). Functionally, histone methyltransferase that specifically monomethylates 'Lys-4' of histone H3. H3 'Lys-4' methylation represents a specific tag for epigenetic transcriptional activation. Plays a central role in the transcriptional activation of genes such as collagenase or insulin. Recruited by IPF1/PDX-1 to the insulin promoter, leading to activate transcription. Also has methyltransferase activity toward non-histone proteins such as CGAS, p53/TP53, TAF10, and possibly TAF7 by recognizing and binding the [KR]-[STA]-K in substrate proteins. Monomethylates 'Lys-189' of TAF10, leading to increase the affinity of TAF10 for RNA polymerase II. Monomethylates 'Lys-372' of p53/TP53, stabilizing p53/TP53 and increasing p53/TP53-mediated transcriptional activation. Monomethylates 'Lys-491' of CGAS, promoting interaction between SGF29 and CGAS. The protein is Histone-lysine N-methyltransferase SETD7 (Setd7) of Mus musculus (Mouse).